A 502-amino-acid chain; its full sequence is Cytochrome P450 71B20 (502 aa).

A helical transmembrane segment spans residues 1-21; it reads MAISFLCFCLITLASLIFFAK. Cys-444 is a heme binding site.

Belongs to the cytochrome P450 family. Heme is required as a cofactor.

It localises to the membrane. The chain is Cytochrome P450 71B20 (CYP71B20) from Arabidopsis thaliana (Mouse-ear cress).